A 216-amino-acid chain; its full sequence is Sperm microtubule inner protein 8 (216 aa).

Microtubule inner protein component of sperm flagellar doublet microtubules. Expressed in testis.

The protein resides in the cytoplasm. The protein localises to the cytoskeleton. It is found in the flagellum axoneme. Its function is as follows. Microtubule inner protein (MIP) part of the dynein-decorated doublet microtubules (DMTs) in flagellum axoneme. May serve to reinforce and thus stabilize the microtubule structure in the sperm flagella. This chain is Sperm microtubule inner protein 8 (Spmip8), found in Mus musculus (Mouse).